Reading from the N-terminus, the 463-residue chain is Dipeptidyl peptidase 1 (463 aa).

A signal peptide spans 1–24 (MGVGPASLLAALLLLLSGDRAVRC). 3 N-linked (GlcNAc...) asparagine glycosylation sites follow: N29, N53, and N119. Disulfide bonds link C30–C118, C54–C136, C255–C298, C291–C331, and C321–C337. The propeptide occupies 135–230 (ACFTGKKVGT…TAEIQQKILH (96 aa)). Residue C258 is part of the active site. N-linked (GlcNAc...) asparagine glycosylation is present at N276. Chloride contacts are provided by F302 and Y304. Chloride is bound at residue Y347. Catalysis depends on residues H405 and N427.

This sequence belongs to the peptidase C1 family. Tetramer of heterotrimers consisting of exclusion domain, heavy- and light chains. Chloride is required as a cofactor.

The protein localises to the lysosome. The enzyme catalyses Release of an N-terminal dipeptide, Xaa-Yaa-|-Zaa-, except when Xaa is Arg or Lys, or Yaa or Zaa is Pro.. Thiol protease. Has dipeptidylpeptidase activity. Active against a broad range of dipeptide substrates composed of both polar and hydrophobic amino acids. Proline cannot occupy the P1 position and arginine cannot occupy the P2 position of the substrate. Can act as both an exopeptidase and endopeptidase. Activates serine proteases such as elastase, cathepsin G and granzymes A and B. The chain is Dipeptidyl peptidase 1 (CTSC) from Macaca fascicularis (Crab-eating macaque).